The chain runs to 633 residues: Pollen receptor-like kinase 3 (633 aa).

Residues 1–19 form the signal peptide; sequence MTAVLFLCFLLICFSFTPS. 2 N-linked (GlcNAc...) asparagine glycosylation sites follow: Asn22 and Asn37. A disulfide bridge links Cys53 with Cys62. LRR repeat units lie at residues 90–115, 117–137, 138–162, 163–186, and 188–210; these read LPNL…KLPG, KSLL…FFKE, TPQL…LMQL, AGLE…TDGN, and VLKS…ISDR. A glycan (N-linked (GlcNAc...) asparagine) is linked at Asn123. An intrachain disulfide couples Cys224 to Cys232. An N-linked (GlcNAc...) asparagine glycan is attached at Asn246. The chain crosses the membrane as a helical span at residues 249 to 269; it reads AKAIFMVILFLLIFLFVVAII. Residues 294–314 show a composition bias toward basic and acidic residues; it reads VEVRVPDSIKKPIDSSKKRSN. Positions 294–339 are disordered; the sequence is VEVRVPDSIKKPIDSSKKRSNAEGSSKKGSSHNGKGAGGGPGSGMG. Positions 328–338 are enriched in gly residues; sequence KGAGGGPGSGM. Residues 358–633 form the Protein kinase domain; it reads KAAAEVLGNG…IVRRIERVTL (276 aa). ATP contacts are provided by residues 364 to 372 and Lys386; that span reads LGNGSLGSA. The residue at position 438 (Ser438) is a Phosphoserine. Thr458 bears the Phosphothreonine mark. A Phosphoserine modification is found at Ser535.

This sequence belongs to the protein kinase superfamily. Ser/Thr protein kinase family. In terms of assembly, interacts in vitro with ROPGEF1 (via PRONE domain). Interacts with PRK6. As to expression, expressed in pollen and/or in flowers, but not in leaves.

The protein resides in the membrane. It carries out the reaction L-seryl-[protein] + ATP = O-phospho-L-seryl-[protein] + ADP + H(+). The catalysed reaction is L-threonyl-[protein] + ATP = O-phospho-L-threonyl-[protein] + ADP + H(+). The phosphorylation activity is calcium-independent. In terms of biological role, receptor-like kinase involved in the control of pollen germination and pollen tube polar growth. Can phosphorylate ROPGEF1 in vitro. This Arabidopsis thaliana (Mouse-ear cress) protein is Pollen receptor-like kinase 3.